The following is a 136-amino-acid chain: Class I hydrophobin 16 (136 aa).

Positions methionine 1–alanine 19 are cleaved as a signal peptide. 4 disulfide bridges follow: cysteine 58–cysteine 115, cysteine 65–cysteine 109, cysteine 66–cysteine 99, and cysteine 116–cysteine 129. A glycan (N-linked (GlcNAc...) asparagine) is linked at asparagine 74.

It belongs to the fungal hydrophobin family. As to quaternary structure, self-assembles to form functional amyloid fibrils called rodlets. Self-assembly into fibrillar rodlets occurs spontaneously at hydrophobic:hydrophilic interfaces and the rodlets further associate laterally to form amphipathic monolayers.

Its subcellular location is the secreted. It is found in the cell wall. Its function is as follows. Aerial growth, conidiation, and dispersal of filamentous fungi in the environment rely upon a capability of their secreting small amphipathic proteins called hydrophobins (HPBs) with low sequence identity. Class I can self-assemble into an outermost layer of rodlet bundles on aerial cell surfaces, conferring cellular hydrophobicity that supports fungal growth, development and dispersal; whereas Class II form highly ordered films at water-air interfaces through intermolecular interactions but contribute nothing to the rodlet structure. Hydph16 is a class I hydrophobin that has specific functions in aerial mycelium formation, cell wall stress protection, and cell wall structure formation, but does not seem to be involved in mycelial hydrophobicity. Specifically functions in resisting cell wall synthesis inhibitors. This Pleurotus ostreatus (strain PC15) (Oyster mushroom) protein is Class I hydrophobin 16.